Here is a 231-residue protein sequence, read N- to C-terminus: 5'-methylthioadenosine/S-adenosylhomocysteine nucleosidase (231 aa).

Catalysis depends on Glu12, which acts as the Proton acceptor. Substrate-binding positions include Gly78, Val153, and 174–175 (ME). Asp198 functions as the Proton donor in the catalytic mechanism.

This sequence belongs to the PNP/UDP phosphorylase family. MtnN subfamily.

It carries out the reaction S-adenosyl-L-homocysteine + H2O = S-(5-deoxy-D-ribos-5-yl)-L-homocysteine + adenine. The catalysed reaction is S-methyl-5'-thioadenosine + H2O = 5-(methylsulfanyl)-D-ribose + adenine. The enzyme catalyses 5'-deoxyadenosine + H2O = 5-deoxy-D-ribose + adenine. Its pathway is amino-acid biosynthesis; L-methionine biosynthesis via salvage pathway; S-methyl-5-thio-alpha-D-ribose 1-phosphate from S-methyl-5'-thioadenosine (hydrolase route): step 1/2. In terms of biological role, catalyzes the irreversible cleavage of the glycosidic bond in both 5'-methylthioadenosine (MTA) and S-adenosylhomocysteine (SAH/AdoHcy) to adenine and the corresponding thioribose, 5'-methylthioribose and S-ribosylhomocysteine, respectively. Also cleaves 5'-deoxyadenosine, a toxic by-product of radical S-adenosylmethionine (SAM) enzymes, into 5-deoxyribose and adenine. The protein is 5'-methylthioadenosine/S-adenosylhomocysteine nucleosidase of Vibrio vulnificus (strain CMCP6).